Consider the following 524-residue polypeptide: Xanthotoxin 5-hydroxylase CYP82C4 (524 aa).

Residues 1–21 (MDTSLFSLFVPILVFVFIALF) form a helical membrane-spanning segment. Residue cysteine 463 coordinates heme.

This sequence belongs to the cytochrome P450 family. Heme is required as a cofactor. As to expression, expressed in both primary and lateral roots under iron-deficient conditions, except in apical root zones, and mostly in the root epidermal layer.

It localises to the membrane. The catalysed reaction is fraxetin + reduced [NADPH--hemoprotein reductase] + O2 = sideretin (reduced form) + oxidized [NADPH--hemoprotein reductase] + H2O + H(+). It catalyses the reaction xanthotoxin + reduced [NADPH--hemoprotein reductase] + O2 = 5-hydroxyxanthotoxin + oxidized [NADPH--hemoprotein reductase] + H2O + 2 H(+). The protein operates within phenylpropanoid metabolism. Can hydroxylate xanthotoxin (8-methoxypsoralen) to form 5-hydroxyxanthotoxin (5-hydroxy-8-methoxypsoralen) in vivo and in vitro. Involved in the early iron deficiency response, possibly through an IDE1-like mediated pathway. Involved in the pathway of sideretin biosynthesis from feruloyl CoA, a redox-active catecholic metabolite exuded by roots in response to iron deficiency in order to facilitate the uptake of iron; this pathway consists in the successive conversion from feruloyl CoA to scopoletin, from scopoletin to fraxetin and from fraxetin to sideretin. Catalyzes the biosynthesis of sideretin via fraxetin hydroxylation. This Arabidopsis thaliana (Mouse-ear cress) protein is Xanthotoxin 5-hydroxylase CYP82C4.